The chain runs to 177 residues: Bifunctional protein PyrR (177 aa).

The short motif at 98 to 110 (IILVDDVIYTGRT) is the PRPP-binding element.

This sequence belongs to the purine/pyrimidine phosphoribosyltransferase family. PyrR subfamily. In terms of assembly, homodimer and homohexamer; in equilibrium.

The catalysed reaction is UMP + diphosphate = 5-phospho-alpha-D-ribose 1-diphosphate + uracil. Its function is as follows. Regulates transcriptional attenuation of the pyrimidine nucleotide (pyr) operon by binding in a uridine-dependent manner to specific sites on pyr mRNA. This disrupts an antiterminator hairpin in the RNA and favors formation of a downstream transcription terminator, leading to a reduced expression of downstream genes. Also displays a weak uracil phosphoribosyltransferase activity which is not physiologically significant. The chain is Bifunctional protein PyrR from Clostridium kluyveri (strain ATCC 8527 / DSM 555 / NBRC 12016 / NCIMB 10680 / K1).